A 323-amino-acid chain; its full sequence is tRNA uridine(34) hydroxylase (323 aa).

The Rhodanese domain occupies 123–217 (SDPDVVVIDT…YLETIPEEES (95 aa)). The Cysteine persulfide intermediate role is filled by C177.

Belongs to the TrhO family.

It carries out the reaction uridine(34) in tRNA + AH2 + O2 = 5-hydroxyuridine(34) in tRNA + A + H2O. Catalyzes oxygen-dependent 5-hydroxyuridine (ho5U) modification at position 34 in tRNAs. This Methylobacillus flagellatus (strain ATCC 51484 / DSM 6875 / VKM B-1610 / KT) protein is tRNA uridine(34) hydroxylase.